We begin with the raw amino-acid sequence, 401 residues long: MGFITKAIPLALAAASVINGAEILETRAGVQTLADKYIVVMNDGMSDKDFDSHRSWVNRTHRRRLIRRGAKAMGGMKYTYNFPTGLKGYSGHFDEQMIKEISKRADVKYIERDARVQINAIEQQDNVPSWGLARVGSREPGGTTYYYDSTAGEGTTAYIIDTGTDIQHEEFDGGRATWGENFADDMDMDCNGHGTHVSGTVGGRTFGVAKKSNIVAVKVLDCNGSGSNSGVIMGMQWATEDAQSKGADKAVVNMSLGGAFSQTSNDAAKAIAEGGVFLAVAAGNDNVDAAEASPASEPSICTVAASTEQDGKADFSNFGQVVDVYAPGDGITSAKPGGGSQVLSGTSMASPHVAGLAAYLIGLGKGGGPQLCDTIKQMAIDVIQNPGSSTTSKLINNGSGM.

Positions methionine 1–glycine 20 are cleaved as a signal peptide. Residues alanine 21–asparagine 119 constitute a propeptide that is removed on maturation. The region spanning lysine 36–isoleucine 118 is the Inhibitor I9 domain. N-linked (GlcNAc...) asparagine glycosylation occurs at asparagine 58. Positions serine 129–methionine 401 constitute a Peptidase S8 domain. Active-site charge relay system residues include aspartate 161 and histidine 193. 2 N-linked (GlcNAc...) asparagine glycosylation sites follow: asparagine 223 and asparagine 253. Serine 347 serves as the catalytic Charge relay system. Asparagine 397 carries N-linked (GlcNAc...) asparagine glycosylation.

This sequence belongs to the peptidase S8 family.

The protein resides in the secreted. Functionally, secreted subtilisin-like serine protease with keratinolytic activity that contributes to pathogenicity. The sequence is that of Subtilisin-like protease 7 (SUB7) from Trichophyton equinum (Horse ringworm fungus).